The following is a 168-amino-acid chain: ATP synthase subunit b (168 aa).

The chain crosses the membrane as a helical span at residues 9–29 (AIPFGTIAYTLVVFLILLVML).

This sequence belongs to the ATPase B chain family. In terms of assembly, F-type ATPases have 2 components, F(1) - the catalytic core - and F(0) - the membrane proton channel. F(1) has five subunits: alpha(3), beta(3), gamma(1), delta(1), epsilon(1). F(0) has three main subunits: a(1), b(2) and c(10-14). The alpha and beta chains form an alternating ring which encloses part of the gamma chain. F(1) is attached to F(0) by a central stalk formed by the gamma and epsilon chains, while a peripheral stalk is formed by the delta and b chains.

The protein resides in the cell membrane. In terms of biological role, f(1)F(0) ATP synthase produces ATP from ADP in the presence of a proton or sodium gradient. F-type ATPases consist of two structural domains, F(1) containing the extramembraneous catalytic core and F(0) containing the membrane proton channel, linked together by a central stalk and a peripheral stalk. During catalysis, ATP synthesis in the catalytic domain of F(1) is coupled via a rotary mechanism of the central stalk subunits to proton translocation. Functionally, component of the F(0) channel, it forms part of the peripheral stalk, linking F(1) to F(0). The protein is ATP synthase subunit b of Bacillus cytotoxicus (strain DSM 22905 / CIP 110041 / 391-98 / NVH 391-98).